Here is a 364-residue protein sequence, read N- to C-terminus: V-type proton ATPase subunit d (364 aa).

This sequence belongs to the V-ATPase V0D/AC39 subunit family. As to quaternary structure, V-ATPase is a heteromultimeric enzyme composed of a peripheral catalytic V1 complex (components A to H) attached to an integral membrane V0 proton pore complex (components: a, c, c', c'', d, e, f and VOA1).

The protein resides in the vacuole membrane. In terms of biological role, subunit of the V0 complex of vacuolar(H+)-ATPase (V-ATPase), a multisubunit enzyme composed of a peripheral complex (V1) that hydrolyzes ATP and a membrane integral complex (V0) that translocates protons. V-ATPase is responsible for acidifying and maintaining the pH of intracellular compartments. This subunit is a non-integral membrane component of the membrane pore domain and is required for proper assembly of the V0 sector. Might be involved in the regulated assembly of V1 subunits onto the membrane sector or alternatively may prevent the passage of protons through V0 pores. The chain is V-type proton ATPase subunit d from Neurospora crassa (strain ATCC 24698 / 74-OR23-1A / CBS 708.71 / DSM 1257 / FGSC 987).